A 334-amino-acid chain; its full sequence is Probable 3-hydroxyisobutyrate dehydrogenase-like 1, mitochondrial (334 aa).

Residues methionine 1–methionine 23 constitute a mitochondrion transit peptide. N-acetylalanine is present on alanine 24. Residues threonine 38–asparagine 67 and threonine 133 each bind NAD(+). Lysine 207 is an active-site residue. Residue lysine 275 participates in NAD(+) binding.

This sequence belongs to the HIBADH-related family. 3-hydroxyisobutyrate dehydrogenase subfamily.

Its subcellular location is the mitochondrion. The enzyme catalyses 3-hydroxy-2-methylpropanoate + NAD(+) = 2-methyl-3-oxopropanoate + NADH + H(+). Its pathway is amino-acid degradation; L-valine degradation. The polypeptide is Probable 3-hydroxyisobutyrate dehydrogenase-like 1, mitochondrial (Arabidopsis thaliana (Mouse-ear cress)).